Consider the following 189-residue polypeptide: Protein GrpE (189 aa).

Basic and acidic residues predominate over residues 1-14; sequence MTDHTPLQPKHEIT. The disordered stretch occupies residues 1 to 23; that stretch reads MTDHTPLQPKHEITDQADQDTSA.

This sequence belongs to the GrpE family. In terms of assembly, homodimer.

Its subcellular location is the cytoplasm. Its function is as follows. Participates actively in the response to hyperosmotic and heat shock by preventing the aggregation of stress-denatured proteins, in association with DnaK and GrpE. It is the nucleotide exchange factor for DnaK and may function as a thermosensor. Unfolded proteins bind initially to DnaJ; upon interaction with the DnaJ-bound protein, DnaK hydrolyzes its bound ATP, resulting in the formation of a stable complex. GrpE releases ADP from DnaK; ATP binding to DnaK triggers the release of the substrate protein, thus completing the reaction cycle. Several rounds of ATP-dependent interactions between DnaJ, DnaK and GrpE are required for fully efficient folding. This is Protein GrpE from Lawsonia intracellularis (strain PHE/MN1-00).